The chain runs to 528 residues: Na(+)/H(+) antiporter NhaB (528 aa).

Helical transmembrane passes span 10–30 (IGNF…SFLI), 63–83 (YPLQ…MTSA), 96–116 (VLLL…LLLF), 131–165 (VSLM…FYAI), 204–224 (LLMH…VGEP), 240–260 (FVVR…LTCL), 305–325 (VLVG…VGLV), 359–379 (LAVF…APVI), 391–411 (LVIF…VFVG), 449–469 (ATPN…APLI), and 476–496 (MVWM…LAIE).

The protein belongs to the NhaB Na(+)/H(+) (TC 2.A.34) antiporter family.

The protein localises to the cell inner membrane. It catalyses the reaction 2 Na(+)(in) + 3 H(+)(out) = 2 Na(+)(out) + 3 H(+)(in). Na(+)/H(+) antiporter that extrudes sodium in exchange for external protons. The chain is Na(+)/H(+) antiporter NhaB from Shewanella sp. (strain W3-18-1).